The primary structure comprises 95 residues: Phospholipase A2 inhibitor gammaCdcPLI (95 aa).

Cystine bridges form between C2/C26, C5/C12, C19/C30, and C61/C77.

Forms dimers or higher order oligomers in a temperature-dependent manner in vitro. As to expression, expressed by the liver.

Its subcellular location is the secreted. Inhibits the enzymatic activity of basic and acidic PLA2 from B.jararacussu and B.pauloensis, respectively, in a dose-dependent manner. Also inhibits myotoxicity and cytotoxicity of BnSp-7 of B.pauloensis. The protein is Phospholipase A2 inhibitor gammaCdcPLI of Crotalus durissus collilineatus (Brazilian rattlesnake).